We begin with the raw amino-acid sequence, 556 residues long: 2-succinyl-5-enolpyruvyl-6-hydroxy-3-cyclohexene-1-carboxylate synthase (556 aa).

The protein belongs to the TPP enzyme family. MenD subfamily. As to quaternary structure, homodimer. It depends on Mg(2+) as a cofactor. Mn(2+) serves as cofactor. Requires thiamine diphosphate as cofactor.

The enzyme catalyses isochorismate + 2-oxoglutarate + H(+) = 5-enolpyruvoyl-6-hydroxy-2-succinyl-cyclohex-3-ene-1-carboxylate + CO2. Its pathway is quinol/quinone metabolism; 1,4-dihydroxy-2-naphthoate biosynthesis; 1,4-dihydroxy-2-naphthoate from chorismate: step 2/7. The protein operates within quinol/quinone metabolism; menaquinone biosynthesis. In terms of biological role, catalyzes the thiamine diphosphate-dependent decarboxylation of 2-oxoglutarate and the subsequent addition of the resulting succinic semialdehyde-thiamine pyrophosphate anion to isochorismate to yield 2-succinyl-5-enolpyruvyl-6-hydroxy-3-cyclohexene-1-carboxylate (SEPHCHC). This is 2-succinyl-5-enolpyruvyl-6-hydroxy-3-cyclohexene-1-carboxylate synthase from Salmonella typhimurium (strain LT2 / SGSC1412 / ATCC 700720).